The sequence spans 283 residues: tRNA dimethylallyltransferase (283 aa).

The segment at 5–8 (DSML) is interaction with substrate tRNA.

Belongs to the IPP transferase family. In terms of assembly, monomer. It depends on Mg(2+) as a cofactor.

It carries out the reaction adenosine(37) in tRNA + dimethylallyl diphosphate = N(6)-dimethylallyladenosine(37) in tRNA + diphosphate. Its function is as follows. Catalyzes the transfer of a dimethylallyl group onto the adenine at position 37 in tRNAs that read codons beginning with uridine, leading to the formation of N6-(dimethylallyl)adenosine (i(6)A). This chain is tRNA dimethylallyltransferase, found in Desulforamulus reducens (strain ATCC BAA-1160 / DSM 100696 / MI-1) (Desulfotomaculum reducens).